Consider the following 964-residue polypeptide: Coatomer subunit beta (964 aa).

HEAT repeat units lie at residues 129–166, 238–275, 314–351, 393–430, and 466–506; these read ELLEPLMPAIRACLDHRHSYVRRNAVLAIFTIYKNFDW, AERSRFIRCIYNLLNSSSNAVRYESAGTLITLSLAPTA, KVMQDLVMDVLRVLAAPDIEVRRKTLALALDLVYSRNI, DVAANVIPVLVEFLSDTNELAAADVLIFIREAIQKFPA, and SQIL…QQGS. The segment covering 490-501 has biased composition (basic and acidic residues); sequence RRLAGDQTEEQK. The disordered stretch occupies residues 490–530; it reads RRLAGDQTEEQKQQQGSAGGNAAGSAAEGSGSGNASNKVTS. A compositionally biased stretch (low complexity) spans 512-526; the sequence is AGSAAEGSGSGNASN.

As to quaternary structure, oligomeric complex that consists of at least the alpha, beta, beta', gamma, delta, epsilon and zeta subunits. During oogenesis and spermatogenesis, expressed in ovariole, germarium, testis tip and testis.

It is found in the cytoplasm. It localises to the golgi apparatus membrane. The protein localises to the cytoplasmic vesicle. Its subcellular location is the COPI-coated vesicle membrane. Its function is as follows. The coatomer is a cytosolic protein complex that binds to dilysine motifs and reversibly associates with Golgi non-clathrin-coated vesicles, which further mediate biosynthetic protein transport from the ER, via the Golgi up to the trans Golgi network. Coatomer complex is required for budding from Golgi membranes, and is essential for the retrograde Golgi-to-ER transport of dilysine-tagged proteins. Required for limiting lipid storage in lipid droplets. The chain is Coatomer subunit beta from Drosophila melanogaster (Fruit fly).